The chain runs to 360 residues: uncharacterized protein (360 aa).

The tract at residues 1 to 33 (MSGRRKGCSAATASSSSSSPPSRLPPLPGHARR) is disordered.

Belongs to the herpesviridae US22 family.

This is an uncharacterized protein from Human cytomegalovirus (strain AD169) (HHV-5).